A 304-amino-acid chain; its full sequence is Glutaminase (304 aa).

Substrate-binding residues include Ser63, Asn113, Glu157, Asn164, Tyr188, Tyr240, and Val258.

It belongs to the glutaminase family. Homotetramer.

The enzyme catalyses L-glutamine + H2O = L-glutamate + NH4(+). In Chromobacterium violaceum (strain ATCC 12472 / DSM 30191 / JCM 1249 / CCUG 213 / NBRC 12614 / NCIMB 9131 / NCTC 9757 / MK), this protein is Glutaminase.